The primary structure comprises 677 residues: MFKTSYNLYDLNYPKNDSLTPIRDYKNDYFHKNDDKLPEIVRKPTRKLSKHENKLNDKKFTNKRPASLDLHSIVESLSNKKIYSPINTEIFQNVVRLNLSPQIPNSPHEGCKFYKIVQEFYLSEVEYYNNLLTANNVYRKALNSDPRFKNKLVKLDSSDELLLFGNIDTIASISKILVTAIKDLLLAKQRGKMLDANEWQKIFTKNEVQQQLYSTFDISEAFEQHLLRIKSTYTSYFVSHQKQMELFTTLRMNKNHFFNKWYEYCLKESGCIKLEDILKSPMKRLTQWIDTLETLESCYEDILSPELGLKLSPTRRKYSLFSNKLETEVSEYKSNSMYNFSLTPSEIIQSYDEDQFTHLLKPPDKQNKNICNASRQESNLDNSRVPSLLSGSSSYYSDVSGLEIVTNTSTASAEMINLKMDEETEFFTLADHISKFKKVMKGLLELKKNLLKNDLSGIIDISLRRINAWKKVIECERPSGAFFAHDNLISTMCSSYIDKLHEQKNQVTILKLTELETDVMNPLERIIAHCTTVKSKLKDLQALKKDYMLFLQEKKANVRDIKRDLLGMHFQNLQNQMKRELPVFITLIHDTIECILLNYIKVFLKYLEIIAGGKKYLQKDLENMSLNDSIATGQIKNLDILQCYSKSRYMTKRMVRKDWPFPGDPSGSRVVRKLFEL.

Thr20 carries the post-translational modification Phosphothreonine. 3 positions are modified to phosphoserine: Ser67, Ser72, and Ser84. Phosphothreonine is present on Thr88. Ser100 and Ser106 each carry phosphoserine. Positions 112 to 326 (KFYKIVQEFY…KYSLFSNKLE (215 aa)) constitute a DH domain.

It localises to the cell tip. Its function is as follows. Promotes cell fusion during zygote formation. The protein is Nuclear fusion protein FUS2 (FUS2) of Saccharomyces cerevisiae (strain ATCC 204508 / S288c) (Baker's yeast).